The sequence spans 477 residues: MNRRPVPFEIGPVHFVGIGGIGMSGIAEIMLRTGYQVQGSDAKPSANTERLEKLGARIFIGHDAKNVEGAYAIVYSTAVKPDNPEMVEGRARRLPLVRRAEMLAELMRLQFSIAVGGTHGKTTTTSMVAAILDAGGLDPTVVNGGIINAYGTNAKVGAGDWIVVEADESDGTFLKLKSTVAVVTNIDPEHLDHYGDFEAVKKAFQDFVENIPFYGFAAVCLDHPEVQAMTARVENRRLVTYGVNPQAEVRAHNIRMGPEGARFSVVIQPRDGGFISFDDLLLPMAGQHNVQNALAAIAVARELGVSPDAIRKGLAAFGGVKRRFTTTGVAGGVRVVDDYGHHPVEIASVLKAARAVSEGKVIAVVQPHRYTRLRDLFEDFCACFNDADTVIVADVYAAGEAPIEGVGKESLVEGLRRYGHRRVLPLPAPAGLAALVREEAHPGDLVVLLGAGDITSWAYALPGELEALSASGGAAAE.

Residue 117–123 participates in ATP binding; it reads GTHGKTT.

It belongs to the MurCDEF family.

It localises to the cytoplasm. The catalysed reaction is UDP-N-acetyl-alpha-D-muramate + L-alanine + ATP = UDP-N-acetyl-alpha-D-muramoyl-L-alanine + ADP + phosphate + H(+). Its pathway is cell wall biogenesis; peptidoglycan biosynthesis. Cell wall formation. This is UDP-N-acetylmuramate--L-alanine ligase from Phenylobacterium zucineum (strain HLK1).